The primary structure comprises 807 residues: Ribosome-releasing factor 2, mitochondrial (807 aa).

A mitochondrion-targeting transit peptide spans 1-18 (MFCRKYAFQTWKQFSRFY). Positions 27–315 (SKTRNIGIIA…GITKYLPSPL (289 aa)) constitute a tr-type G domain. Residues 36-43 (AHIDAGKT), 100-104 (DTPGH), and 154-157 (NKMD) contribute to the GTP site.

Belongs to the TRAFAC class translation factor GTPase superfamily. Classic translation factor GTPase family. EF-G/EF-2 subfamily.

It is found in the mitochondrion. In terms of biological role, mitochondrial GTPase that mediates the disassembly of ribosomes from messenger RNA at the termination of mitochondrial protein biosynthesis. Not involved in the GTP-dependent ribosomal translocation step during translation elongation. The chain is Ribosome-releasing factor 2, mitochondrial from Candida dubliniensis (strain CD36 / ATCC MYA-646 / CBS 7987 / NCPF 3949 / NRRL Y-17841) (Yeast).